Reading from the N-terminus, the 345-residue chain is Fructose-bisphosphate aldolase (345 aa).

A D-glyceraldehyde 3-phosphate-binding site is contributed by Ser-53. Asp-95 functions as the Proton donor in the catalytic mechanism. Zn(2+)-binding residues include His-96, Asp-131, Glu-161, and His-212. Gly-213 lines the dihydroxyacetone phosphate pocket. His-252 contacts Zn(2+). Dihydroxyacetone phosphate is bound by residues 253–255 (GGS) and 274–277 (NVDT).

The protein belongs to the class II fructose-bisphosphate aldolase family. Zn(2+) is required as a cofactor.

The catalysed reaction is beta-D-fructose 1,6-bisphosphate = D-glyceraldehyde 3-phosphate + dihydroxyacetone phosphate. It functions in the pathway carbohydrate degradation; glycolysis; D-glyceraldehyde 3-phosphate and glycerone phosphate from D-glucose: step 4/4. Catalyzes the aldol condensation of dihydroxyacetone phosphate (DHAP or glycerone-phosphate) with glyceraldehyde 3-phosphate (G3P) to form fructose 1,6-bisphosphate (FBP) in gluconeogenesis and the reverse reaction in glycolysis. The sequence is that of Fructose-bisphosphate aldolase (fba) from Mycobacterium leprae (strain TN).